The following is a 373-amino-acid chain: S-adenosylmethionine:tRNA ribosyltransferase-isomerase (373 aa).

This sequence belongs to the QueA family. As to quaternary structure, monomer.

The protein localises to the cytoplasm. The catalysed reaction is 7-aminomethyl-7-carbaguanosine(34) in tRNA + S-adenosyl-L-methionine = epoxyqueuosine(34) in tRNA + adenine + L-methionine + 2 H(+). The protein operates within tRNA modification; tRNA-queuosine biosynthesis. Transfers and isomerizes the ribose moiety from AdoMet to the 7-aminomethyl group of 7-deazaguanine (preQ1-tRNA) to give epoxyqueuosine (oQ-tRNA). This is S-adenosylmethionine:tRNA ribosyltransferase-isomerase from Rhizobium etli (strain CIAT 652).